Here is a 167-residue protein sequence, read N- to C-terminus: Ubiquitin-conjugating enzyme E2 14 (167 aa).

Ala2 bears the N-acetylalanine mark. Positions 5–165 constitute a UBC core domain; sequence QASLLLQKQL…VSRCVRRSQE (161 aa). Cys90 serves as the catalytic Glycyl thioester intermediate.

It belongs to the ubiquitin-conjugating enzyme family.

It catalyses the reaction S-ubiquitinyl-[E1 ubiquitin-activating enzyme]-L-cysteine + [E2 ubiquitin-conjugating enzyme]-L-cysteine = [E1 ubiquitin-activating enzyme]-L-cysteine + S-ubiquitinyl-[E2 ubiquitin-conjugating enzyme]-L-cysteine.. It participates in protein modification; protein ubiquitination. Accepts the ubiquitin from the E1 complex and catalyzes its covalent attachment to other proteins. Involved in the formation of multiubiquitin chains. Signal the protein for selective degradation. The protein is Ubiquitin-conjugating enzyme E2 14 (UBC14) of Arabidopsis thaliana (Mouse-ear cress).